We begin with the raw amino-acid sequence, 337 residues long: tRNA N6-adenosine threonylcarbamoyltransferase (337 aa).

Fe cation contacts are provided by His110 and His114. Residues 133-137, Asp166, Gly179, Asp183, and Asn276 contribute to the substrate site; that span reads MVSGG. A Fe cation-binding site is contributed by Asp302.

This sequence belongs to the KAE1 / TsaD family. It depends on Fe(2+) as a cofactor.

It localises to the cytoplasm. The enzyme catalyses L-threonylcarbamoyladenylate + adenosine(37) in tRNA = N(6)-L-threonylcarbamoyladenosine(37) in tRNA + AMP + H(+). Its function is as follows. Required for the formation of a threonylcarbamoyl group on adenosine at position 37 (t(6)A37) in tRNAs that read codons beginning with adenine. Is involved in the transfer of the threonylcarbamoyl moiety of threonylcarbamoyl-AMP (TC-AMP) to the N6 group of A37, together with TsaE and TsaB. TsaD likely plays a direct catalytic role in this reaction. The polypeptide is tRNA N6-adenosine threonylcarbamoyltransferase (Fervidobacterium nodosum (strain ATCC 35602 / DSM 5306 / Rt17-B1)).